A 167-amino-acid chain; its full sequence is Ribosome maturation factor RimM (167 aa).

The 72-residue stretch at 94-165 (EHEYYYSDII…TIKITPMEGL (72 aa)) folds into the PRC barrel domain.

Belongs to the RimM family. In terms of assembly, binds ribosomal protein uS19.

The protein localises to the cytoplasm. An accessory protein needed during the final step in the assembly of 30S ribosomal subunit, possibly for assembly of the head region. Essential for efficient processing of 16S rRNA. May be needed both before and after RbfA during the maturation of 16S rRNA. It has affinity for free ribosomal 30S subunits but not for 70S ribosomes. In Staphylococcus epidermidis (strain ATCC 12228 / FDA PCI 1200), this protein is Ribosome maturation factor RimM.